A 173-amino-acid polypeptide reads, in one-letter code: Translation initiation factor IF-3 (173 aa).

The protein belongs to the IF-3 family. In terms of assembly, monomer.

Its subcellular location is the cytoplasm. In terms of biological role, IF-3 binds to the 30S ribosomal subunit and shifts the equilibrium between 70S ribosomes and their 50S and 30S subunits in favor of the free subunits, thus enhancing the availability of 30S subunits on which protein synthesis initiation begins. In Phenylobacterium zucineum (strain HLK1), this protein is Translation initiation factor IF-3.